Reading from the N-terminus, the 552-residue chain is Urocanate hydratase (552 aa).

NAD(+)-binding positions include 48–49, Gln-126, 172–174, Glu-192, Arg-197, 238–239, 259–263, 269–270, and Tyr-318; these read GG, GMG, NA, QTSAH, and YV. Cys-406 is an active-site residue. Residue Gly-488 participates in NAD(+) binding.

This sequence belongs to the urocanase family. NAD(+) is required as a cofactor.

It is found in the cytoplasm. It catalyses the reaction 4-imidazolone-5-propanoate = trans-urocanate + H2O. Its pathway is amino-acid degradation; L-histidine degradation into L-glutamate; N-formimidoyl-L-glutamate from L-histidine: step 2/3. In terms of biological role, catalyzes the conversion of urocanate to 4-imidazolone-5-propionate. The polypeptide is Urocanate hydratase (Herpetosiphon aurantiacus (strain ATCC 23779 / DSM 785 / 114-95)).